The chain runs to 303 residues: Glycine--tRNA ligase alpha subunit (303 aa).

The protein belongs to the class-II aminoacyl-tRNA synthetase family. In terms of assembly, tetramer of two alpha and two beta subunits.

Its subcellular location is the cytoplasm. The catalysed reaction is tRNA(Gly) + glycine + ATP = glycyl-tRNA(Gly) + AMP + diphosphate. The sequence is that of Glycine--tRNA ligase alpha subunit from Bordetella pertussis (strain Tohama I / ATCC BAA-589 / NCTC 13251).